Here is a 367-residue protein sequence, read N- to C-terminus: Choline-phosphate cytidylyltransferase A (367 aa).

Methionine 1 bears the N-acetylmethionine mark. The disordered stretch occupies residues 1-33 (MDAQCSAKVNARKRRKEAPGPNGATEEDGVPSK). Lysine 8 carries the post-translational modification N6-acetyllysine. Isoleucine 84, phenylalanine 85, histidine 92, and lysine 122 together coordinate CTP. Residues lysine 122 and tryptophan 151 each coordinate phosphocholine. The CTP site is built by histidine 168, aspartate 169, tyrosine 173, glutamine 195, arginine 196, threonine 197, and isoleucine 200. Amphipathic regions lie at residues 228-287 (KELN…EFIG) and 298-315 (ALKH…QAIS). A Phosphoserine modification is found at serine 233. The interval 272–293 (IDLIQKWEEKSREFIGSFLEMF) is autoinhibitory (AI). The interval 313-367 (AISPKQSPSSSPTRERSPSPSFRWPFSGKTSPPCSPANLSRHKAAAYDISEDEED) is disordered. Residues serine 315, serine 319, serine 321, serine 322, and serine 323 each carry the phosphoserine modification. Repeat 1 spans residues 319–324 (SPSSSP). Residues 319–339 (SPSSSPTRERSPSPSFRWPFS) show a composition bias toward low complexity. Position 325 is a phosphothreonine (threonine 325). Phosphoserine occurs at positions 329, 331, and 333. Residues 329-333 (SPSPS) form a 2; approximate repeat. Threonine 342 is subject to Phosphothreonine. Residues serine 343, serine 347, serine 352, and serine 362 each carry the phosphoserine modification. The stretch at 343 to 348 (SPPCSP) is repeat 3.

The protein belongs to the cytidylyltransferase family. In terms of assembly, homodimer. The serine residues of the C-terminus are phosphorylated. The inactive soluble form is stabilized by phosphorylation, the active membrane bound form is promoted by anionic lipids or diacylglycerol, and is stabilized by dephosphorylation. In terms of processing, monoubiquitinated by the SCF(FBXL2) complex, leading to proteasomal degradation. Brain, placenta, liver, fetal and adult lung.

It localises to the cytoplasm. The protein localises to the cytosol. It is found in the membrane. Its subcellular location is the endoplasmic reticulum membrane. The protein resides in the nucleus. The enzyme catalyses phosphocholine + CTP + H(+) = CDP-choline + diphosphate. The protein operates within phospholipid metabolism; phosphatidylcholine biosynthesis; phosphatidylcholine from phosphocholine: step 1/2. Interconverts between an inactive cytosolic form and an active membrane-bound form. Activation involves disruption of an inhibitory interaction between helices at the base of the active site and the autoinhibitory (AI) region. Activated by anionic lipid vesicles and by oleic acid or diacylglycerol-containing phosphatidylcholine vesicles. Functionally, catalyzes the key rate-limiting step in the CDP-choline pathway for phosphatidylcholine biosynthesis. This Homo sapiens (Human) protein is Choline-phosphate cytidylyltransferase A (PCYT1A).